Here is a 400-residue protein sequence, read N- to C-terminus: Na(+)/H(+) antiporter NhaA (400 aa).

The next 12 membrane-spanning stretches (helical) occupy residues 26–46 (AGGI…NSPL), 71–91 (LIHW…GMEV), 107–127 (IFPA…YWFI), 137–157 (GWAI…ALLS), 166–186 (IFLL…IALF), 189–209 (HGLS…LILL), 212–232 (FKVS…ASVL), 233–253 (KSGV…PLKG), 273–293 (FVIL…GIDV), 299–319 (PLLL…IFGF), 340–360 (IFAV…LASL), and 373–393 (LSRL…YLFL).

This sequence belongs to the NhaA Na(+)/H(+) (TC 2.A.33) antiporter family.

It localises to the cell inner membrane. The enzyme catalyses Na(+)(in) + 2 H(+)(out) = Na(+)(out) + 2 H(+)(in). Functionally, na(+)/H(+) antiporter that extrudes sodium in exchange for external protons. The sequence is that of Na(+)/H(+) antiporter NhaA from Haemophilus influenzae (strain PittEE).